Reading from the N-terminus, the 3169-residue chain is FRAS1-related extracellular matrix protein 2 (3169 aa).

Residues M1–P24 are disordered. The N-terminal stretch at M1–A46 is a signal peptide. Polar residues predominate over residues G8–Q21. Residues Q47–T3113 lie on the Extracellular side of the membrane. CSPG repeat units lie at residues K319 to E413, A438 to V537, P560 to Q675, P700 to E807, Q828 to S919, H945 to S1037, A1066 to S1168, E1189 to T1282, T1303 to T1399, V1420 to T1512, K1532 to T1621, and V1655 to E1752. N358 carries N-linked (GlcNAc...) asparagine glycosylation. N-linked (GlcNAc...) asparagine glycosylation is found at N1244 and N1369. Residues N1584 and N1741 are each glycosylated (N-linked (GlcNAc...) asparagine). Calx-beta domains lie at L1759 to S1858, A1871 to S1982, Q1997 to R2103, V2118 to G2220, and T2238 to K2342. The segment at S3036–S3057 is disordered. Residues L3037 to T3047 show a composition bias toward polar residues. A helical membrane pass occupies residues V3114–M3134. Topologically, residues C3135–V3169 are cytoplasmic. The interval F3141 to V3169 is disordered.

The protein belongs to the FRAS1 family. As to quaternary structure, interacts with FREM1.

The protein localises to the cell membrane. Its function is as follows. Extracellular matrix protein required for maintenance of the integrity of the skin epithelium and for maintenance of renal epithelia. Required for epidermal adhesion. Involved in the development of eyelids and the anterior segment of the eyeballs. This is FRAS1-related extracellular matrix protein 2 (FREM2) from Homo sapiens (Human).